We begin with the raw amino-acid sequence, 128 residues long: Phosphoribosyl-AMP cyclohydrolase (128 aa).

A Mg(2+)-binding site is contributed by Asp89. Position 90 (Cys90) interacts with Zn(2+). Mg(2+)-binding residues include Asp91 and Asp93. Positions 106 and 113 each coordinate Zn(2+).

It belongs to the PRA-CH family. Homodimer. The cofactor is Mg(2+). Requires Zn(2+) as cofactor.

The protein localises to the cytoplasm. The enzyme catalyses 1-(5-phospho-beta-D-ribosyl)-5'-AMP + H2O = 1-(5-phospho-beta-D-ribosyl)-5-[(5-phospho-beta-D-ribosylamino)methylideneamino]imidazole-4-carboxamide. Its pathway is amino-acid biosynthesis; L-histidine biosynthesis; L-histidine from 5-phospho-alpha-D-ribose 1-diphosphate: step 3/9. Catalyzes the hydrolysis of the adenine ring of phosphoribosyl-AMP. The sequence is that of Phosphoribosyl-AMP cyclohydrolase from Pyrobaculum calidifontis (strain DSM 21063 / JCM 11548 / VA1).